The following is a 282-amino-acid chain: NADPH-dependent 7-cyano-7-deazaguanine reductase (282 aa).

Position 88 to 90 (88 to 90 (IES)) interacts with substrate. 90-91 (SK) is an NADPH binding site. The active-site Thioimide intermediate is Cys-190. Catalysis depends on Asp-197, which acts as the Proton donor. 229-230 (HE) lines the substrate pocket. Residue 258–259 (RG) coordinates NADPH.

Belongs to the GTP cyclohydrolase I family. QueF type 2 subfamily. In terms of assembly, homodimer.

The protein resides in the cytoplasm. The enzyme catalyses 7-aminomethyl-7-carbaguanine + 2 NADP(+) = 7-cyano-7-deazaguanine + 2 NADPH + 3 H(+). The protein operates within tRNA modification; tRNA-queuosine biosynthesis. In terms of biological role, catalyzes the NADPH-dependent reduction of 7-cyano-7-deazaguanine (preQ0) to 7-aminomethyl-7-deazaguanine (preQ1). The polypeptide is NADPH-dependent 7-cyano-7-deazaguanine reductase (Escherichia coli (strain SMS-3-5 / SECEC)).